The chain runs to 958 residues: Coiled-coil domain-containing protein 187 (958 aa).

A compositionally biased stretch (low complexity) spans 116 to 132; that stretch reads SSVSSGRMSGSSGGHES. Disordered stretches follow at residues 116 to 160, 345 to 447, 470 to 492, and 510 to 602; these read SSVS…SDPR, ELTR…PRFF, QDIS…QRPW, and EPSP…KAQA. Polar residues-rich tracts occupy residues 374–398 and 470–491; these read LQST…NSSL and QDIS…SQRP. Positions 536–545 are enriched in low complexity; sequence SSPSSKGKSA. Residues 718–743 are a coiled coil; the sequence is KQARLQALETMAEALRQRVDILTTKL. The segment at 916-958 is disordered; sequence EVKKEGLVTPWTTRSCGKGEPADRPWAGWSGGQGGLPWASSTA.

The polypeptide is Coiled-coil domain-containing protein 187 (Mus musculus (Mouse)).